Here is a 216-residue protein sequence, read N- to C-terminus: MLIFKICFYRLLPLSVLLLAACSALKAPESSSVLKNHIASDEWQEYQHQLKQIQQFQIQGSVAYFSDEKKAYARFFWQQYSPKNYHLLLLSPLGQTEFELKVTNGRVDMAKYKDQGEIKGDAEEILFKLTGIPIPLEHLSRWIVGASSDADEIILNRQSRLKTLIHHKKEQTWKVYYQAYNTKITPILPERLELYLISPNHQDQRMTLKINHWILK.

Positions 1 to 21 (MLIFKICFYRLLPLSVLLLAA) are cleaved as a signal peptide. A lipid anchor (N-palmitoyl cysteine) is attached at C22. C22 carries the S-diacylglycerol cysteine lipid modification.

It belongs to the LolB family. In terms of assembly, monomer.

The protein resides in the cell outer membrane. Its function is as follows. Plays a critical role in the incorporation of lipoproteins in the outer membrane after they are released by the LolA protein. The chain is Outer-membrane lipoprotein LolB from Hamiltonella defensa subsp. Acyrthosiphon pisum (strain 5AT).